The chain runs to 259 residues: 3-deoxy-manno-octulosonate cytidylyltransferase (259 aa).

Belongs to the KdsB family.

The protein localises to the cytoplasm. The enzyme catalyses 3-deoxy-alpha-D-manno-oct-2-ulosonate + CTP = CMP-3-deoxy-beta-D-manno-octulosonate + diphosphate. The protein operates within nucleotide-sugar biosynthesis; CMP-3-deoxy-D-manno-octulosonate biosynthesis; CMP-3-deoxy-D-manno-octulosonate from 3-deoxy-D-manno-octulosonate and CTP: step 1/1. It functions in the pathway bacterial outer membrane biogenesis; lipopolysaccharide biosynthesis. In terms of biological role, activates KDO (a required 8-carbon sugar) for incorporation into bacterial lipopolysaccharide in Gram-negative bacteria. The sequence is that of 3-deoxy-manno-octulosonate cytidylyltransferase from Actinobacillus succinogenes (strain ATCC 55618 / DSM 22257 / CCUG 43843 / 130Z).